A 192-amino-acid chain; its full sequence is CASP-like protein 2U1 (192 aa).

Residues 1–11 (MASRKQGAREG) are Cytoplasmic-facing. The helical transmembrane segment at 12–32 (LWSMGVRLLTTLLCITSLILL) threads the bilayer. Topologically, residues 33–58 (LKAKQTVRRALGLGYIAQTVKYSDTS) are extracellular. A helical transmembrane segment spans residues 59–79 (GFIYLVYINILVAAYGLIVFV). Topologically, residues 80–96 (SLIPSALGKSCSGKCSR) are cytoplasmic. A helical transmembrane segment spans residues 97-117 (WTIFVLDQVFAYVLLSAVSAA). Residues 118–145 (TEVLYLADKGMSKTQWEALCPTYGFFCH) are Extracellular-facing. The chain crosses the membrane as a helical span at residues 146-166 (MVSASVAIGSVAVVLLAVLSV). At 167-192 (SSAQSLFHNFYTRALYTTKMRHSSLT) the chain is on the cytoplasmic side.

The protein belongs to the Casparian strip membrane proteins (CASP) family. Homodimer and heterodimers.

Its subcellular location is the cell membrane. The polypeptide is CASP-like protein 2U1 (Adiantum capillus-veneris (Maidenhair fern)).